Here is a 2646-residue protein sequence, read N- to C-terminus: Probable helicase senataxin (2646 aa).

Residue S102 is modified to Phosphoserine. K339 is covalently cross-linked (Glycyl lysine isopeptide (Lys-Gly) (interchain with G-Cter in SUMO1)). Residue S640 is modified to Phosphoserine. Disordered regions lie at residues 705–734 (KISA…WGCD) and 825–876 (GGAL…DDED). Residues 714–727 (ESSSYAPSNSTSRN) show a composition bias toward polar residues. The span at 867-876 (LDNSSSDDED) shows a compositional bias: acidic residues. A phosphoserine mark is found at S870, S871, S872, S938, S1002, and S1004. The segment at 1001–1023 (ISDSDEEEDEDEDERSSSEENIK) is disordered. The span at 1003–1014 (DSDEEEDEDEDE) shows a compositional bias: acidic residues. K1051 participates in a covalent cross-link: Glycyl lysine isopeptide (Lys-Gly) (interchain with G-Cter in SUMO2). Residues 1122-1133 (RNKAEGVKEHAG) are compositionally biased toward basic and acidic residues. Residues 1122-1245 (RNKAEGVKEH…DTRRGQSKSS (124 aa)) form a disordered region. Residues 1147-1156 (GVKKPKRKRY) show a composition bias toward basic residues. A compositionally biased stretch (basic and acidic residues) spans 1176 to 1189 (LPDRRDLTESDLKS). Residues 1196-1211 (TPSSSVERDSTILQKS) are compositionally biased toward polar residues. The segment covering 1212–1222 (TKSRTHSKPVR) has biased composition (basic residues). S1318 carries the phosphoserine modification. Residues K1328, K1329, and K1398 each participate in a glycyl lysine isopeptide (Lys-Gly) (interchain with G-Cter in SUMO2) cross-link. The residue at position 1472 (S1472) is a Phosphoserine. At T1474 the chain carries Phosphothreonine. Residues 1591–1627 (LSKSLESTTLQQSALKNKSSGAQPNLKVTPPSSMGSQ) form a disordered region. Residues 1595-1613 (LESTTLQQSALKNKSSGAQ) show a composition bias toward polar residues. Residue 1939–1946 (GPPGTGKS) participates in ATP binding. A Bipartite nuclear localization signal motif is present at residues 2046-2063 (KKDLPSHIQEMLRRKEIL). A Phosphothreonine modification is found at T2450. Disordered regions lie at residues 2450-2472 (THPP…NRLD), 2486-2506 (HTPS…QDRL), and 2569-2624 (SHRS…THHV). Basic and acidic residues-rich tracts occupy residues 2496–2506 (GPERPLLQDRL) and 2593–2608 (KYSD…REPR). Positions 2632–2646 (RRRLDDSSAKRRQFL) are necessary for nuclear localization.

Belongs to the DNA2/NAM7 helicase family. In terms of assembly, homodimer. Interacts with PER2; the interaction inhibits termination of circadian target genes. Interacts with CHD4, POLR2A, PRKDC and TRIM28. Interacts with UBE2I. Interacts (via N-terminus domain) with EXOSC9 (via C-terminus region); the interaction enhances SETX sumoylation. Interacts with NCL (via N-terminus domain). Interacts with PABPN1, PABPC1 and SF3B1. Interacts with SMN1/SMN2 and POLR2A; SMN1/SMN2 recruits SETX to POLR2A. In terms of processing, ubiquitinated. Sumoylated preferentially with SUMO2 or SUMO3. Expressed in cerebellum, hippocampus, olfactory bulb, Bergmann glial fibers, stellate cells and Purkinje cells. Expressed in the epithelial cells of the lens but not in mature lens fiber cells. Expressed in the retina (highly expressed in inner and outer segments of photoreceptors and outer plexiform layer cells but weakly expressed in the inner plexiform and ganglion cell layers). Expressed in the kidney.

The protein localises to the nucleus. It localises to the nucleoplasm. The protein resides in the nucleolus. Its subcellular location is the cytoplasm. It is found in the chromosome. The protein localises to the telomere. It localises to the cell projection. The protein resides in the axon. Its subcellular location is the growth cone. Probable RNA/DNA helicase involved in diverse aspects of RNA metabolism and genomic integrity. Plays a role in transcription regulation by its ability to modulate RNA Polymerase II (Pol II) binding to chromatin and through its interaction with proteins involved in transcription. Contributes to the mRNA splicing efficiency and splice site selection. Required for the resolution of R-loop RNA-DNA hybrid formation at G-rich pause sites located downstream of the poly(A) site, allowing XRN2 recruitment and XRN2-mediated degradation of the downstream cleaved RNA and hence efficient RNA polymerase II (RNAp II) transcription termination. Required for the 3' transcriptional termination of PER1 and CRY2, thus playing an important role in the circadian rhythm regulation. Involved in DNA double-strand breaks damage response generated by oxidative stress. In association with RRP45, targets the RNA exosome complex to sites of transcription-induced DNA damage. Plays a role in the development and maturation of germ cells: essential for male meiosis, acting at the interface of transcription and meiotic recombination, and in the process of gene silencing during meiotic sex chromosome inactivation (MSCI). Plays a role in neurite outgrowth in hippocampal cells through FGF8-activated signaling pathways. Inhibits retinoic acid-induced apoptosis. May be involved in telomeric stability through the regulation of telomere repeat-containing RNA (TERRA) transcription. The polypeptide is Probable helicase senataxin (Mus musculus (Mouse)).